A 640-amino-acid polypeptide reads, in one-letter code: Protein ALTERED PHOSPHATE STARVATION RESPONSE 1 (640 aa).

Positions 60-175 (TPLHLHHNPP…ATPQASSVVS (116 aa)) are disordered. The segment covering 68-87 (PPSPSPPPPPPPRPPPPPLS) has biased composition (pro residues). A compositionally biased stretch (low complexity) spans 88–103 (PGSETTTWTTTTTSSV). Residues 104-118 (LPPPPPPPPPPPPPS) are compositionally biased toward pro residues. Residues 144-173 (TTATRTATGTGSDAAVTTAPTTATPQASSV) show a composition bias toward low complexity. Positions 336–371 (KTEKAKKDVEKLESQLSVSSQAIQSASNEIIKLRET) form a coiled coil.

In terms of tissue distribution, expressed in the root tip of primary and lateral roots, specifically in the meristematic region, including the quiescent center and lateral root cap cells.

The protein resides in the nucleus. In terms of biological role, required for the coordination of cell differentiation and cell elongation in the root tip. Required for the coordination of cell processes necessary for correct root growth in response to phosphate starvation, through the modulation of the auxin transporter protein PIN7. This is Protein ALTERED PHOSPHATE STARVATION RESPONSE 1 from Arabidopsis thaliana (Mouse-ear cress).